The sequence spans 930 residues: Isoleucine--tRNA ligase (930 aa).

Residues 1 to 21 (MRVKDTLNLGKTKFPMRGRLP) are disordered. Residues 57–67 (PYANGPIHIGH) carry the 'HIGH' region motif. Glu555 serves as a coordination point for L-isoleucyl-5'-AMP. Positions 596–600 (KMSKS) match the 'KMSKS' region motif. Lys599 contributes to the ATP binding site. Zn(2+) contacts are provided by Cys889, Cys892, Cys909, and Cys912.

This sequence belongs to the class-I aminoacyl-tRNA synthetase family. IleS type 1 subfamily. As to quaternary structure, monomer. Requires Zn(2+) as cofactor.

It is found in the cytoplasm. The enzyme catalyses tRNA(Ile) + L-isoleucine + ATP = L-isoleucyl-tRNA(Ile) + AMP + diphosphate. Its function is as follows. Catalyzes the attachment of isoleucine to tRNA(Ile). As IleRS can inadvertently accommodate and process structurally similar amino acids such as valine, to avoid such errors it has two additional distinct tRNA(Ile)-dependent editing activities. One activity is designated as 'pretransfer' editing and involves the hydrolysis of activated Val-AMP. The other activity is designated 'posttransfer' editing and involves deacylation of mischarged Val-tRNA(Ile). This chain is Isoleucine--tRNA ligase, found in Limosilactobacillus fermentum (strain NBRC 3956 / LMG 18251) (Lactobacillus fermentum).